The following is a 185-amino-acid chain: Intraflagellar transport protein 22 homolog (185 aa).

Residues 10–17 (GPCESGKT), 63–67 (DCGGD), and 123–126 (HKPG) each bind GTP. Ser-137 is modified (phosphoserine).

The protein belongs to the small GTPase superfamily. Rab family. In terms of assembly, component of the IFT complex B, at least composed of IFT20, IFT22, IFT25, IFT27, IFT46, IFT52, TRAF3IP1/IFT54, IFT57, IFT74, IFT80, IFT81, and IFT88. Interacts with IFT88. Interacts with CFAP61.

The protein localises to the cell projection. It is found in the cilium. Functionally, small GTPase-like component of the intraflagellar transport (IFT) complex B. The sequence is that of Intraflagellar transport protein 22 homolog (IFT22) from Macaca fascicularis (Crab-eating macaque).